A 150-amino-acid polypeptide reads, in one-letter code: Ribonuclease HI (150 aa).

One can recognise an RNase H type-1 domain in the interval 1–142 (MSDSVELFTD…ADQLANRGVD (142 aa)). 4 residues coordinate Mg(2+): D10, E48, D70, and D134.

This sequence belongs to the RNase H family. Monomer. Mg(2+) serves as cofactor.

The protein resides in the cytoplasm. The enzyme catalyses Endonucleolytic cleavage to 5'-phosphomonoester.. Endonuclease that specifically degrades the RNA of RNA-DNA hybrids. The polypeptide is Ribonuclease HI (Pseudomonas syringae pv. tomato (strain ATCC BAA-871 / DC3000)).